We begin with the raw amino-acid sequence, 280 residues long: 4-hydroxy-tetrahydrodipicolinate reductase (280 aa).

NAD(+) contacts are provided by residues 14 to 19 (GAAGRM), D40, 106 to 108 (ATT), and 130 to 133 (APSM). H166 (proton donor/acceptor) is an active-site residue. Position 167 (H167) interacts with (S)-2,3,4,5-tetrahydrodipicolinate. The active-site Proton donor is K170. Position 176-177 (176-177 (GT)) interacts with (S)-2,3,4,5-tetrahydrodipicolinate.

Belongs to the DapB family.

The protein localises to the cytoplasm. The enzyme catalyses (S)-2,3,4,5-tetrahydrodipicolinate + NAD(+) + H2O = (2S,4S)-4-hydroxy-2,3,4,5-tetrahydrodipicolinate + NADH + H(+). The catalysed reaction is (S)-2,3,4,5-tetrahydrodipicolinate + NADP(+) + H2O = (2S,4S)-4-hydroxy-2,3,4,5-tetrahydrodipicolinate + NADPH + H(+). Its pathway is amino-acid biosynthesis; L-lysine biosynthesis via DAP pathway; (S)-tetrahydrodipicolinate from L-aspartate: step 4/4. Catalyzes the conversion of 4-hydroxy-tetrahydrodipicolinate (HTPA) to tetrahydrodipicolinate. This chain is 4-hydroxy-tetrahydrodipicolinate reductase, found in Rhodopirellula baltica (strain DSM 10527 / NCIMB 13988 / SH1).